Here is a 141-residue protein sequence, read N- to C-terminus: Aspartate 1-decarboxylase (141 aa).

The active-site Schiff-base intermediate with substrate; via pyruvic acid is the serine 25. Serine 25 is subject to Pyruvic acid (Ser). Residue threonine 57 coordinates substrate. Residue tyrosine 58 is the Proton donor of the active site. 73–75 (GAA) contacts substrate.

The protein belongs to the PanD family. Heterooctamer of four alpha and four beta subunits. Pyruvate is required as a cofactor. In terms of processing, is synthesized initially as an inactive proenzyme, which is activated by self-cleavage at a specific serine bond to produce a beta-subunit with a hydroxyl group at its C-terminus and an alpha-subunit with a pyruvoyl group at its N-terminus.

The protein resides in the cytoplasm. The enzyme catalyses L-aspartate + H(+) = beta-alanine + CO2. It functions in the pathway cofactor biosynthesis; (R)-pantothenate biosynthesis; beta-alanine from L-aspartate: step 1/1. Catalyzes the pyruvoyl-dependent decarboxylation of aspartate to produce beta-alanine. The polypeptide is Aspartate 1-decarboxylase (Pseudarthrobacter chlorophenolicus (strain ATCC 700700 / DSM 12829 / CIP 107037 / JCM 12360 / KCTC 9906 / NCIMB 13794 / A6) (Arthrobacter chlorophenolicus)).